A 169-amino-acid chain; its full sequence is Peptide methionine sulfoxide reductase MsrA (169 aa).

Residue C10 is part of the active site.

Belongs to the MsrA Met sulfoxide reductase family.

The enzyme catalyses L-methionyl-[protein] + [thioredoxin]-disulfide + H2O = L-methionyl-(S)-S-oxide-[protein] + [thioredoxin]-dithiol. The catalysed reaction is [thioredoxin]-disulfide + L-methionine + H2O = L-methionine (S)-S-oxide + [thioredoxin]-dithiol. Its function is as follows. Has an important function as a repair enzyme for proteins that have been inactivated by oxidation. Catalyzes the reversible oxidation-reduction of methionine sulfoxide in proteins to methionine. This is Peptide methionine sulfoxide reductase MsrA from Streptococcus agalactiae serotype III (strain NEM316).